The sequence spans 559 residues: Glutamine--tRNA ligase (559 aa).

The 'HIGH' region motif lies at P44 to H54. Residues E45–N47 and H51–S57 contribute to the ATP site. Residues D77 and Y222 each coordinate L-glutamine. Residues T241 and R272–L273 contribute to the ATP site. A 'KMSKS' region motif is present at residues L279–R283.

This sequence belongs to the class-I aminoacyl-tRNA synthetase family. In terms of assembly, monomer.

The protein resides in the cytoplasm. The enzyme catalyses tRNA(Gln) + L-glutamine + ATP = L-glutaminyl-tRNA(Gln) + AMP + diphosphate. This Pasteurella multocida (strain Pm70) protein is Glutamine--tRNA ligase.